Reading from the N-terminus, the 413-residue chain is Oxidoreductase vrtI (413 aa).

The Fe2OG dioxygenase domain maps to 235 to 341; it reads DAESLTTLSM…RYSIAYFLRA (107 aa). Fe cation is bound by residues His262, Asp264, and His319. Residue Arg332 participates in 2-oxoglutarate binding.

Belongs to the iron/ascorbate-dependent oxidoreductase family.

Its pathway is secondary metabolite biosynthesis; terpenoid biosynthesis. In terms of biological role, oxidoreductase; part of the gene cluster that mediates the biosynthesis of viridicatumtoxin, a tetracycline-like fungal meroterpenoid with a unique, fused spirobicyclic ring system. The first step of the pathway is the production of the malonamoyl-CoA starter unit for the polyketide synthase vrtA. The aldolase vrtJ may be involved in the synthesis of the malonamate substrate for malonamoyl-CoA synthetase vrtB. The polyketide synthase vrtA then may utilize the malonamoyl-CoA starter unit, followed by sequential condensation of eight malonyl-CoA units to form the polyketide backbone. The cyclization of the last ring could be mediated by the lactamase-like protein vrtG. The proposed post-PKS tailoring steps are a hydroxylation at C5 catalyzed the cytochrome P450 monooxygenase vrtE, a hydroxylation at C12a catalyzed by VrtH and/or VrtI, and an O-methylation by the O-methyltransferase vrtF. VrtC is then proposed to catalyze the transfer of a geranyl group synthesized by vrtD to the aromatic C ring of the tetracyclic polyketide intermediate of viridicatumtoxin to yield previridicatumtoxin. Finally, the cytochrome P450 monooxygenase vrtK catalyzes the spirocyclization of the geranyl moiety of previridicatumtoxin to afford viridicatumtoxin. The protein is Oxidoreductase vrtI of Penicillium aethiopicum.